A 163-amino-acid polypeptide reads, in one-letter code: Calmodulin (163 aa).

Residue Ala-2 is modified to N-acetylalanine. EF-hand domains lie at 11–46 (EQIA…LGQN), 47–82 (PTEA…KMKE), 84–119 (DHED…LGEK), and 120–155 (LSEE…GATD). Ca(2+)-binding residues include Asp-24, Asp-26, Asp-28, Thr-30, Glu-35, Asp-60, Asp-62, Asn-64, Thr-66, Glu-71, Asp-97, Asp-99, Asn-101, Glu-108, Asp-133, Asp-135, Asp-137, Gln-139, and Glu-144.

The protein belongs to the calmodulin family. As to quaternary structure, associates with the spoke-associated complex containing CFAP61, CFAP91 and CFAP251; the association is calcium sensitive. In terms of processing, trimethylation of Lys-119 observed in other calmodulins is absent here.

Its subcellular location is the cytoplasm. It localises to the cytoskeleton. It is found in the flagellum axoneme. Functionally, calmodulin mediates the control of a large number of enzymes, ion channels and other proteins by Ca(2+). Among the enzymes to be stimulated by the calmodulin-Ca(2+) complex are a number of protein kinases and phosphatases. This is Calmodulin from Chlamydomonas reinhardtii (Chlamydomonas smithii).